The chain runs to 357 residues: O-methyltransferase 9 (357 aa).

S-adenosyl-L-methionine-binding residues include G200, D224, N249, F250, and K263. H267 serves as the catalytic Proton acceptor.

This sequence belongs to the class I-like SAM-binding methyltransferase superfamily. Cation-independent O-methyltransferase family. COMT subfamily.

The enzyme catalyses (3,5-dichloro-2,4,6-trihydroxyphenyl)hexan-1-one + S-adenosyl-L-methionine = 1-(3,5-dichloro-2,6-dihydroxy-4-methoxyphenyl)hexan-1-one + S-adenosyl-L-homocysteine + H(+). The protein is O-methyltransferase 9 (omt9) of Dictyostelium discoideum (Social amoeba).